A 115-amino-acid polypeptide reads, in one-letter code: Ribonuclease P protein component (115 aa).

It belongs to the RnpA family. Consists of a catalytic RNA component (M1 or rnpB) and a protein subunit.

It carries out the reaction Endonucleolytic cleavage of RNA, removing 5'-extranucleotides from tRNA precursor.. Its function is as follows. RNaseP catalyzes the removal of the 5'-leader sequence from pre-tRNA to produce the mature 5'-terminus. It can also cleave other RNA substrates such as 4.5S RNA. The protein component plays an auxiliary but essential role in vivo by binding to the 5'-leader sequence and broadening the substrate specificity of the ribozyme. The polypeptide is Ribonuclease P protein component (Bacillus cereus (strain Q1)).